The chain runs to 250 residues: Ubiquinone/menaquinone biosynthesis C-methyltransferase UbiE (250 aa).

Residues Thr73, Asp94, 122 to 123 (NA), and Ser139 contribute to the S-adenosyl-L-methionine site.

This sequence belongs to the class I-like SAM-binding methyltransferase superfamily. MenG/UbiE family.

The catalysed reaction is a 2-demethylmenaquinol + S-adenosyl-L-methionine = a menaquinol + S-adenosyl-L-homocysteine + H(+). The enzyme catalyses a 2-methoxy-6-(all-trans-polyprenyl)benzene-1,4-diol + S-adenosyl-L-methionine = a 5-methoxy-2-methyl-3-(all-trans-polyprenyl)benzene-1,4-diol + S-adenosyl-L-homocysteine + H(+). It participates in quinol/quinone metabolism; menaquinone biosynthesis; menaquinol from 1,4-dihydroxy-2-naphthoate: step 2/2. The protein operates within cofactor biosynthesis; ubiquinone biosynthesis. Functionally, methyltransferase required for the conversion of demethylmenaquinol (DMKH2) to menaquinol (MKH2) and the conversion of 2-polyprenyl-6-methoxy-1,4-benzoquinol (DDMQH2) to 2-polyprenyl-3-methyl-6-methoxy-1,4-benzoquinol (DMQH2). The polypeptide is Ubiquinone/menaquinone biosynthesis C-methyltransferase UbiE (Francisella tularensis subsp. novicida (strain U112)).